The chain runs to 49 residues: Multidrug efflux pump accessory protein AcrZ (49 aa).

Residues 1–7 (MLELLKS) are Periplasmic-facing. Residues 8–28 (LVFAVIMVPVVMAIILGLIYG) form a helical membrane-spanning segment. At 29–49 (LGEVFNIFSGVGKKDQPGQNH) the chain is on the cytoplasmic side.

Belongs to the AcrZ family. In terms of assembly, part of the AcrA-AcrB-AcrZ-TolC efflux pump, interacts directly with AcrB.

Its subcellular location is the cell inner membrane. Functionally, acrA-AcrB-AcrZ-TolC is a drug efflux protein complex with a broad substrate specificity. This protein binds to AcrB and is required for efflux of some but not all substrates, suggesting it may influence the specificity of drug export. The protein is Multidrug efflux pump accessory protein AcrZ of Escherichia coli O157:H7.